The following is a 1555-amino-acid chain: Phospholipid-transporting ATPase DNF1 (1555 aa).

Residues 1-85 (MAPPQEEGGG…SSNNGGSAPR (85 aa)) are disordered. Residues 1–134 (MAPPQEEGGG…PKNLWFQFHN (134 aa)) lie on the Cytoplasmic side of the membrane. Over residues 22 to 37 (WATRRLTVKSGARKRL) the composition is skewed to basic residues. The span at 72 to 82 (GSISSSNNGGS) shows a compositional bias: low complexity. The chain crosses the membrane as a helical span at residues 135–155 (IANIFFLFLVILVIFPIFGGV). Position 156 (asparagine 156) is a topological domain, extracellular. The helical transmembrane segment at 157–177 (PGLNSVPLIVIITVTAIKDAI) threads the bilayer. The Cytoplasmic segment spans residues 178–491 (EDYRRTILDI…ARIARELNFN (314 aa)). Positions 257–288 (TRTAPWDPSHRRSVASHTEEIQMTPVPSPVPH) are disordered. The helical transmembrane segment at 492 to 512 (VICNFGILLIMCLIAAIANGI) threads the bilayer. Over 513–537 (AWGKTDASLAWFEYGSIGGTPALTG) the chain is Extracellular. The chain crosses the membrane as a helical span at residues 538-558 (FITFWAAVIVFQNLVPISLYI). The Cytoplasmic portion of the chain corresponds to 559-1123 (SLEIVRTLQA…TISNFFYKNM (565 aa)). Aspartate 606 serves as the catalytic 4-aspartylphosphate intermediate. Aspartate 606, lysine 607, threonine 608, glutamate 740, phenylalanine 781, serine 783, lysine 786, lysine 804, arginine 839, threonine 840, threonine 919, glycine 920, aspartate 921, arginine 1031, and lysine 1037 together coordinate ATP. Aspartate 606 contributes to the Mg(2+) binding site. Threonine 608 lines the Mg(2+) pocket. Aspartate 1057 lines the Mg(2+) pocket. ATP-binding residues include asparagine 1060 and aspartate 1061. Aspartate 1061 serves as a coordination point for Mg(2+). Residues 1124 to 1144 (IWTWSIFWYQCYCNFDIAYIF) traverse the membrane as a helical segment. Residues 1145 to 1146 (EY) lie on the Extracellular side of the membrane. The helical transmembrane segment at 1147 to 1167 (TYILMFNLFFTSVPVILMGVL) threads the bilayer. Topologically, residues 1168 to 1200 (DQDVSDTVSLAVPQLYRRGIERKEWTQTKFWLY) are cytoplasmic. The chain crosses the membrane as a helical span at residues 1201–1221 (MIDGVYQSVMSFFIPFIFVVL). Over 1222 to 1237 (TPTAAGNGLDVSERTR) the chain is Extracellular. Residues 1238 to 1258 (LGAYIAHPAVITINGYILINT) form a helical membrane-spanning segment. At 1259-1262 (YRWD) the chain is on the cytoplasmic side. The helical transmembrane segment at 1263–1283 (WLMLLSIVLSDVFIFFWTGVY) threads the bilayer. At 1284-1302 (TATTYSAGFYQAAPQVYQE) the chain is on the extracellular side. A helical membrane pass occupies residues 1303–1323 (LTFWMCLIVTPALCLLPRLVV). A 1,2-diacyl-sn-glycero-3-phospho-L-serine is bound at residue arginine 1320. The Cytoplasmic segment spans residues 1324–1555 (KCIQKQRFPY…EGEPPREPPM (232 aa)). Disordered stretches follow at residues 1364–1456 (VEGE…ERTR) and 1489–1555 (ESTH…EPPM). Over residues 1406–1432 (ATHNTRAQNGSDGTTYIMQSRTSTELQ) the composition is skewed to polar residues. 2 stretches are compositionally biased toward basic and acidic residues: residues 1436-1456 (PFDR…ERTR) and 1540-1555 (KSID…EPPM).

This sequence belongs to the cation transport ATPase (P-type) (TC 3.A.3) family. Type IV subfamily. As to quaternary structure, component of a flippase complex consisting of DNF1 and CDC50. Interacts with CDC50; the interaction is direct. It depends on Mg(2+) as a cofactor.

It is found in the cell membrane. It localises to the endosome membrane. The protein localises to the golgi apparatus. The protein resides in the trans-Golgi network membrane. It catalyses the reaction ATP + H2O + phospholipidSide 1 = ADP + phosphate + phospholipidSide 2.. The catalysed reaction is a 1,2-diacyl-sn-glycero-3-phosphoethanolamine(out) + ATP + H2O = a 1,2-diacyl-sn-glycero-3-phosphoethanolamine(in) + ADP + phosphate + H(+). It carries out the reaction a 1,2-diacyl-sn-glycero-3-phosphocholine(out) + ATP + H2O = a 1,2-diacyl-sn-glycero-3-phosphocholine(in) + ADP + phosphate + H(+). The enzyme catalyses a beta-D-glucosyl-(1&lt;-&gt;1')-N-acylsphing-4-enine(out) + ATP + H2O = a beta-D-glucosyl-(1&lt;-&gt;1')-N-acylsphing-4-enine(in) + ADP + phosphate + H(+). It catalyses the reaction a 1,2-diacyl-sn-glycero-3-phospho-L-serine(out) + ATP + H2O = a 1,2-diacyl-sn-glycero-3-phospho-L-serine(in) + ADP + phosphate + H(+). Catalytic component of a P4-ATPase flippase complex which catalyzes the hydrolysis of ATP coupled to the transport of phosphatidylcholine and phosphatidylserine from the lumenal to the cytosolic leaflet of membranes and ensures the maintenance of asymmetric distribution of phospholipids. May also transport glucosylceramide and phosphatidylethanolamine. The chain is Phospholipid-transporting ATPase DNF1 from Chaetomium thermophilum (strain DSM 1495 / CBS 144.50 / IMI 039719) (Thermochaetoides thermophila).